A 152-amino-acid chain; its full sequence is Mitochondrial fission 1 protein (152 aa).

Methionine 1 carries the N-acetylmethionine modification. The Cytoplasmic segment spans residues methionine 1 to glycine 122. At serine 10 the chain carries Phosphoserine. One copy of the TPR repeat lies at arginine 71–asparagine 104. The helical transmembrane segment at leucine 123–isoleucine 143 threads the bilayer. Topologically, residues glycine 144–serine 152 are mitochondrial intermembrane.

It belongs to the FIS1 family. In terms of assembly, interacts with DNM1L/DLP1 through the TPR region; may form part of a larger protein complex at the endoplasmic reticulum-mitochondrial interface during mitochondrial fission. Interacts with MARCHF5. Interacts with MIEF1. Interacts with PEX11A, PEX11B and PEX11G. Ubiquitinated by MARCHF5.

The protein localises to the mitochondrion outer membrane. It is found in the peroxisome membrane. Its function is as follows. Involved in the fragmentation of the mitochondrial network and its perinuclear clustering. Plays a minor role in the recruitment and association of the fission mediator dynamin-related protein 1 (DNM1L) to the mitochondrial surface and mitochondrial fission. May not be essential for the assembly of functional fission complexes and the subsequent membrane scission event. Also mediates peroxisomal fission. May act when the products of fission are directed toward mitochondrial homeostasis, mitophagy, or apoptosis. Can induce cytochrome c release from the mitochondrion to the cytosol, ultimately leading to apoptosis. The polypeptide is Mitochondrial fission 1 protein (Rattus norvegicus (Rat)).